The following is a 379-amino-acid chain: Cytochrome b (379 aa).

A run of 4 helical transmembrane segments spans residues 33 to 53 (FGSL…FLAM), 77 to 98 (WLIR…YLHI), 113 to 133 (WNIG…GYVL), and 178 to 198 (FFAF…VHLL). Positions 83 and 97 each coordinate heme b. Residues His182 and His196 each coordinate heme b. Residue His201 participates in a ubiquinone binding. 4 consecutive transmembrane segments (helical) span residues 226–246 (TKDF…VLFF), 288–308 (MGGV…PHIQ), 320–340 (ISQF…WIGG), and 347–367 (FIII…AFLP).

It belongs to the cytochrome b family. The cytochrome bc1 complex contains 11 subunits: 3 respiratory subunits (MT-CYB, CYC1 and UQCRFS1), 2 core proteins (UQCRC1 and UQCRC2) and 6 low-molecular weight proteins (UQCRH/QCR6, UQCRB/QCR7, UQCRQ/QCR8, UQCR10/QCR9, UQCR11/QCR10 and a cleavage product of UQCRFS1). This cytochrome bc1 complex then forms a dimer. The cofactor is heme b.

The protein resides in the mitochondrion inner membrane. Functionally, component of the ubiquinol-cytochrome c reductase complex (complex III or cytochrome b-c1 complex) that is part of the mitochondrial respiratory chain. The b-c1 complex mediates electron transfer from ubiquinol to cytochrome c. Contributes to the generation of a proton gradient across the mitochondrial membrane that is then used for ATP synthesis. The polypeptide is Cytochrome b (MT-CYB) (Dipodomys ordii (Ord's kangaroo rat)).